The primary structure comprises 1043 residues: Peroxisomal ATPase PEX1 (1043 aa).

Residues Ala453–Arg626 form an AAA-cassette D1 region. ATP contacts are provided by residues Gly461–Thr468 and Gly738–Thr745. The AAA-cassette D2 stretch occupies residues Gly733–His926.

This sequence belongs to the AAA ATPase family. As to quaternary structure, interacts with PEX6; forming the PEX1-PEX6 AAA ATPase complex, which is composed of a heterohexamer formed by a trimer of PEX1-PEX6 dimers. The PEX1-PEX6 heterooligomers associate with the peroxisomal importomer via interaction of PEX6 with the peroxisomal membrane anchor PEX15.

It is found in the cytoplasm. The protein localises to the cytosol. The protein resides in the peroxisome membrane. The enzyme catalyses ATP + H2O = ADP + phosphate + H(+). Its function is as follows. Component of the PEX1-PEX6 AAA ATPase complex, a protein dislocase complex that mediates the ATP-dependent extraction of the PEX5 receptor from peroxisomal membranes, an essential step for PEX5 recycling. Specifically recognizes PEX5 monoubiquitinated at 'Cys-6', and pulls it out of the peroxisome lumen through the PEX2-PEX10-PEX12 retrotranslocation channel. Extraction by the PEX1-PEX6 AAA ATPase complex is accompanied by unfolding of the TPR repeats and release of bound cargo from PEX5. The sequence is that of Peroxisomal ATPase PEX1 from Saccharomyces cerevisiae (strain ATCC 204508 / S288c) (Baker's yeast).